Consider the following 505-residue polypeptide: AMP phosphorylase (505 aa).

Residues glycine 170, 196–201 (SRAITS), and threonine 205 contribute to the AMP site. The active-site Proton donor is the aspartate 258. AMP-binding residues include serine 266 and lysine 290.

This sequence belongs to the thymidine/pyrimidine-nucleoside phosphorylase family. Type 2 subfamily.

The catalysed reaction is AMP + phosphate = alpha-D-ribose 1,5-bisphosphate + adenine. It carries out the reaction CMP + phosphate = cytosine + alpha-D-ribose 1,5-bisphosphate. It catalyses the reaction UMP + phosphate = alpha-D-ribose 1,5-bisphosphate + uracil. Functionally, catalyzes the conversion of AMP and phosphate to adenine and ribose 1,5-bisphosphate (R15P). Exhibits phosphorylase activity toward CMP and UMP in addition to AMP. Functions in an archaeal AMP degradation pathway, together with R15P isomerase and RubisCO. The polypeptide is AMP phosphorylase (Methanococcus maripaludis (strain DSM 14266 / JCM 13030 / NBRC 101832 / S2 / LL)).